We begin with the raw amino-acid sequence, 740 residues long: Polyribonucleotide nucleotidyltransferase (740 aa).

The Mg(2+) site is built by Asp-496 and Asp-502. In terms of domain architecture, KH spans 563-622 (PAIIRTSIHPDKIRDIIGPGGKIIKKLVEETGADIDIEDDGRVFIAAVDREKGKRALEII). The S1 motif domain occupies 632–706 (GKLYNGKVTR…QQGRLKLSKK (75 aa)). The disordered stretch occupies residues 707 to 740 (EAMRDMGLAPAESTSEQPEKRERRPFSRPKATKE). Positions 723-740 (QPEKRERRPFSRPKATKE) are enriched in basic and acidic residues.

The protein belongs to the polyribonucleotide nucleotidyltransferase family. Mg(2+) serves as cofactor.

The protein localises to the cytoplasm. The enzyme catalyses RNA(n+1) + phosphate = RNA(n) + a ribonucleoside 5'-diphosphate. Involved in mRNA degradation. Catalyzes the phosphorolysis of single-stranded polyribonucleotides processively in the 3'- to 5'-direction. This chain is Polyribonucleotide nucleotidyltransferase, found in Desulforamulus reducens (strain ATCC BAA-1160 / DSM 100696 / MI-1) (Desulfotomaculum reducens).